A 508-amino-acid chain; its full sequence is Light-independent protochlorophyllide reductase subunit B (508 aa).

Residue Asp-36 participates in [4Fe-4S] cluster binding. Asp-294 serves as the catalytic Proton donor. 429-430 (GM) contacts substrate.

Belongs to the ChlB/BchB/BchZ family. In terms of assembly, protochlorophyllide reductase is composed of three subunits; ChlL, ChlN and ChlB. Forms a heterotetramer of two ChlB and two ChlN subunits. The cofactor is [4Fe-4S] cluster.

The enzyme catalyses chlorophyllide a + oxidized 2[4Fe-4S]-[ferredoxin] + 2 ADP + 2 phosphate = protochlorophyllide a + reduced 2[4Fe-4S]-[ferredoxin] + 2 ATP + 2 H2O. The protein operates within porphyrin-containing compound metabolism; chlorophyll biosynthesis (light-independent). Functionally, component of the dark-operative protochlorophyllide reductase (DPOR) that uses Mg-ATP and reduced ferredoxin to reduce ring D of protochlorophyllide (Pchlide) to form chlorophyllide a (Chlide). This reaction is light-independent. The NB-protein (ChlN-ChlB) is the catalytic component of the complex. This chain is Light-independent protochlorophyllide reductase subunit B, found in Synechocystis sp. (strain ATCC 27184 / PCC 6803 / Kazusa).